A 71-amino-acid polypeptide reads, in one-letter code: Palustrin-2AJ2 (71 aa).

An N-terminal signal peptide occupies residues 1–22 (MFTLKKPLLVLLFLGTVSLSLC). Residues 23-40 (EQERAADDDEGEVIEEEV) constitute a propeptide that is removed on maturation. An intrachain disulfide couples Cys65 to Cys71.

In terms of tissue distribution, expressed by the skin glands.

It localises to the secreted. In terms of biological role, displays broad-spectrum antibacterial activity against a range of Gram-positive and Gram-negative bacteria. Has low hemolytic activity, low cytotoxicity and low antioxidant activity. The polypeptide is Palustrin-2AJ2 (Amolops jingdongensis (Chinese torrent frog)).